The chain runs to 103 residues: Histone H4.2 (103 aa).

A compositionally biased stretch (gly residues) spans 1–14; sequence MTGRGKGGKGLGKG. Positions 1–20 are disordered; it reads MTGRGKGGKGLGKGGAKRHR. K6 is subject to N6-acetyl-N6-methyllysine; alternate. Residues K6, K9, and K13 each carry the N6-methyllysine; alternate modification. Residue K13 is modified to N6-acetyl-N6-methyllysine; alternate. Residues 17-21 mediate DNA binding; it reads KRHRK. An N6-glutaryllysine modification is found at K92.

Belongs to the histone H4 family. In terms of assembly, the nucleosome is a histone octamer containing two molecules each of H2A, H2B, H3 and H4 assembled in one H3-H4 heterotetramer and two H2A-H2B heterodimers. The octamer wraps approximately 147 bp of DNA. Post-translationally, glutarylation at Lys-92 (H4K91glu) destabilizes nucleosomes by promoting dissociation of the H2A-H2B dimers from nucleosomes.

It localises to the nucleus. Its subcellular location is the chromosome. Core component of nucleosome. Nucleosomes wrap and compact DNA into chromatin, limiting DNA accessibility to the cellular machineries which require DNA as a template. Histones thereby play a central role in transcription regulation, DNA repair, DNA replication and chromosomal stability. DNA accessibility is regulated via a complex set of post-translational modifications of histones, also called histone code, and nucleosome remodeling. The chain is Histone H4.2 (H4.2) from Talaromyces funiculosus (Fruitlet core rot fungus).